The primary structure comprises 314 residues: Ribonuclease Z (314 aa).

7 residues coordinate Zn(2+): H63, H65, D67, H68, H142, D205, and H263. D67 (proton acceptor) is an active-site residue.

This sequence belongs to the RNase Z family. In terms of assembly, homodimer. Zn(2+) serves as cofactor.

It catalyses the reaction Endonucleolytic cleavage of RNA, removing extra 3' nucleotides from tRNA precursor, generating 3' termini of tRNAs. A 3'-hydroxy group is left at the tRNA terminus and a 5'-phosphoryl group is left at the trailer molecule.. Functionally, zinc phosphodiesterase, which displays some tRNA 3'-processing endonuclease activity. Probably involved in tRNA maturation, by removing a 3'-trailer from precursor tRNA. In Kineococcus radiotolerans (strain ATCC BAA-149 / DSM 14245 / SRS30216), this protein is Ribonuclease Z.